The primary structure comprises 171 residues: Cytochrome c oxidase subunit 5, mitochondrial (171 aa).

The N-terminal 27 residues, 1-27 (MLRTPTVSALVRNVAVRAAKPTMAVRA), are a transit peptide targeting the mitochondrion. The Mitochondrial matrix portion of the chain corresponds to 28–100 (ASTMPISNPT…ALPPPGEQKK (73 aa)). The helical transmembrane segment at 101–123 (VLAYTVAGVFLSFVIFATMRAFA) threads the bilayer. Residues 124-171 (KPPPATMTKEWQEATNEFLKAQKSDPLTGLTSEGYNGKGHVQSPSASA) lie on the Mitochondrial intermembrane side of the membrane. The segment at 145 to 171 (QKSDPLTGLTSEGYNGKGHVQSPSASA) is disordered.

Belongs to the cytochrome c oxidase IV family. Component of the cytochrome c oxidase (complex IV, CIV), a multisubunit enzyme composed of 11 subunits. The complex is composed of a catalytic core of 3 subunits Cox1, Cox2 and Cox3, encoded in the mitochondrial DNA, and 8 supernumerary subunits Cox4, Cox5a/Cox5, Cox6, Cox7, Cox8, Cox7a/Cox9, Cox6b/Cox12 and Cox6a/Cox13, which are encoded in the nuclear genome. The complex exists as a monomer or a dimer and forms respiratory supercomplexes (SCs) in the inner mitochondrial membrane with NADH-ubiquinone oxidoreductase (complex I, CI) and ubiquinol-cytochrome c oxidoreductase (cytochrome b-c1 complex, complex III, CIII), resulting in various different assemblies (supercomplexes I(1)IV(1), I(1)III(3)IV(2), III(2)IV(1) and III(2)IV(2) as well as larger supercomplexes of compositions like I(1)III(2)IV(5-6)).

It localises to the mitochondrion inner membrane. Its pathway is energy metabolism; oxidative phosphorylation. In terms of biological role, component of the cytochrome c oxidase, the last enzyme in the mitochondrial electron transport chain which drives oxidative phosphorylation. The respiratory chain contains 3 multisubunit complexes succinate dehydrogenase (complex II, CII), ubiquinol-cytochrome c oxidoreductase (cytochrome b-c1 complex, complex III, CIII) and cytochrome c oxidase (complex IV, CIV), that cooperate to transfer electrons derived from NADH and succinate to molecular oxygen, creating an electrochemical gradient over the inner membrane that drives transmembrane transport and the ATP synthase. Cytochrome c oxidase is the component of the respiratory chain that catalyzes the reduction of oxygen to water. Electrons originating from reduced cytochrome c in the intermembrane space (IMS) are transferred via the dinuclear copper A center (CU(A)) of Cox2 and heme A of Cox1 to the active site in Cox1, a binuclear center (BNC) formed by heme A3 and copper B (CU(B)). The BNC reduces molecular oxygen to 2 water molecules using 4 electrons from cytochrome c in the IMS and 4 protons from the mitochondrial matrix. This is Cytochrome c oxidase subunit 5, mitochondrial (cya-4) from Neurospora crassa (strain ATCC 24698 / 74-OR23-1A / CBS 708.71 / DSM 1257 / FGSC 987).